Here is a 446-residue protein sequence, read N- to C-terminus: Adenylosuccinate synthetase (446 aa).

GTP contacts are provided by residues Gly20 to Lys26 and Gly48 to Thr50. The Proton acceptor role is filled by Asp21. Residues Asp21 and Gly48 each coordinate Mg(2+). Residues Asp21–Lys24, Asn46–His49, Thr137, Arg151, Gln232, Thr247, and Arg319 contribute to the IMP site. The active-site Proton donor is the His49. Ser315–Arg321 contacts substrate. Residues Arg321, Lys347–Asp349, and Ser429–Gly431 each bind GTP.

This sequence belongs to the adenylosuccinate synthetase family. As to quaternary structure, homodimer. Mg(2+) is required as a cofactor.

It is found in the cytoplasm. The catalysed reaction is IMP + L-aspartate + GTP = N(6)-(1,2-dicarboxyethyl)-AMP + GDP + phosphate + 2 H(+). The protein operates within purine metabolism; AMP biosynthesis via de novo pathway; AMP from IMP: step 1/2. Its function is as follows. Plays an important role in the de novo pathway of purine nucleotide biosynthesis. Catalyzes the first committed step in the biosynthesis of AMP from IMP. This is Adenylosuccinate synthetase from Ralstonia nicotianae (strain ATCC BAA-1114 / GMI1000) (Ralstonia solanacearum).